Consider the following 274-residue polypeptide: Ribose-5-phosphate isomerase (274 aa).

It belongs to the ribose 5-phosphate isomerase family.

It is found in the cytoplasm. The catalysed reaction is aldehydo-D-ribose 5-phosphate = D-ribulose 5-phosphate. The protein operates within carbohydrate degradation; pentose phosphate pathway; D-ribose 5-phosphate from D-ribulose 5-phosphate (non-oxidative stage): step 1/1. This Kluyveromyces lactis (strain ATCC 8585 / CBS 2359 / DSM 70799 / NBRC 1267 / NRRL Y-1140 / WM37) (Yeast) protein is Ribose-5-phosphate isomerase (RKI1).